The primary structure comprises 510 residues: MEEPQAGDAARFSCPPNFTAKPPASESPRFSLEALTGPDTELWLIQAPADFAPECFNGRHVPLSGSQIVKGKLAGKRHRYRVLSSCPQAGEATLLAPSTEAGGGLTCASAPQGTLRILEGPQQSLSGSPLQPIPASPPPQIPPGLRPRFCAFGGNPPVTGPRSALAPNLLTSGKKKKEMQVTEAPVTQEAVNGHGALEVDMALGSPEMDVRKKKKKKNQQLKEPEAAGPVGTEPTVETLEPLGVLFPSTTKKRKKPKGKETFEPEDKTVKQEQINTEPLEDTVLSPTKKRKRQKGTEGMEPEEGVTVESQPQVKVEPLEEAIPLPPTKKRKKEKGQMAMMEPGTEAMEPVEPEMKPLESPGGTMAPQQPEGAKPQAQAALAAPKKKTKKEKQQDATVEPETEVVGPELPDDLEPQAAPTSTKKKKKKKERGHTVTEPIQPLEPELPGEGQPEARATPGSTKKRKKQSQESRMPETVPQEEMPGPPLNSESGEEAPTGRDKKRKQQQQQPV.

N-acetylmethionine is present on methionine 1. Residues 1–31 (MEEPQAGDAARFSCPPNFTAKPPASESPRFS) are disordered. Serine 27 is modified (phosphoserine). Tyrosine 80 carries the phosphotyrosine modification. The interval 120–143 (GPQQSLSGSPLQPIPASPPPQIPP) is disordered. Phosphoserine occurs at positions 128, 136, 172, and 205. The span at 131 to 143 (QPIPASPPPQIPP) shows a compositional bias: pro residues. The interval 203-510 (LGSPEMDVRK…KRKQQQQQPV (308 aa)) is disordered. Basic and acidic residues predominate over residues 258-270 (GKETFEPEDKTVK). A Glycyl lysine isopeptide (Lys-Gly) (interchain with G-Cter in SUMO1); alternate cross-link involves residue lysine 270. Lysine 270 is covalently cross-linked (Glycyl lysine isopeptide (Lys-Gly) (interchain with G-Cter in SUMO2); alternate). Serine 285 carries the post-translational modification Phosphoserine. Threonine 287 carries the phosphothreonine modification. A Phosphoserine modification is found at serine 309. A Glycyl lysine isopeptide (Lys-Gly) (interchain with G-Cter in SUMO1); alternate cross-link involves residue lysine 314. Residue lysine 314 forms a Glycyl lysine isopeptide (Lys-Gly) (interchain with G-Cter in SUMO2); alternate linkage. Composition is skewed to low complexity over residues 372–382 (AKPQAQAALAA) and 394–407 (DATV…VGPE). Positions 421-430 (TKKKKKKKER) are enriched in basic residues. The segment covering 436–452 (EPIQPLEPELPGEGQPE) has biased composition (low complexity). The residue at position 490 (serine 490) is a Phosphoserine.

It belongs to the eukaryotic RPA34 RNA polymerase subunit family. In terms of assembly, component of the RNA polymerase I (Pol I) complex consisting of 13 subunits: a ten-subunit catalytic core composed of POLR1A/RPA1, POLR1B/RPA2, POLR1C/RPAC1, POLR1D/RPAC2, POLR1H/RPA12, POLR2E/RPABC1, POLR2F/RPABC2, POLR2H/RPABC3, POLR2K/RPABC4 and POLR2L/RPABC5; a mobile stalk subunit POLR1F/RPA43 protruding from the core and additional subunits homologous to general transcription factors POLR1E/RPA49 and POLR1G/RPA34. Forms a heterodimer with POLR1E/RPA49. Part of Pol I pre-initiation complex (PIC), in which Pol I core assembles with RRN3 and promoter-bound UTBF and SL1/TIF-IB complex. Interacts with TAF1A thereby associates with the SL1/TIF-IB complex. Interacts with UBTF. Interacts with POLR1E/PRAF1 through its N-terminal region. As to quaternary structure, interacts with CD3E. Post-translationally, undergoes tyrosine phosphorylation upon T-cell receptor (TCR) stimulation. This phosphorylation has not been confirmed by other groups. Phosphorylated on tyrosine residues in initiation-competent Pol I-beta complexes but not in Pol I-alpha complexes.

The protein resides in the nucleus. It is found in the nucleolus. Its subcellular location is the chromosome. Component of RNA polymerase I (Pol I), a DNA-dependent RNA polymerase which synthesizes ribosomal RNA precursors using the four ribonucleoside triphosphates as substrates. Involved in UBTF-activated transcription, presumably at a step following PIC formation. Functionally, has been described as a component of preformed T-cell receptor (TCR) complex. In Homo sapiens (Human), this protein is DNA-directed RNA polymerase I subunit RPA34.